The following is a 408-amino-acid chain: CinA-like protein (408 aa).

It belongs to the CinA family.

The chain is CinA-like protein from Thermotoga maritima (strain ATCC 43589 / DSM 3109 / JCM 10099 / NBRC 100826 / MSB8).